Reading from the N-terminus, the 1085-residue chain is Carbamoyl phosphate synthase large chain (1085 aa).

The carboxyphosphate synthetic domain stretch occupies residues M1 to E399. ATP contacts are provided by R127, R167, G174, E206, L208, E213, G239, V240, H241, Q283, and E297. One can recognise an ATP-grasp 1 domain in the interval K131–V326. Residues Q283, E297, and N299 each contribute to the Mg(2+) site. Mn(2+)-binding residues include Q283, E297, and N299. The segment at N400–G551 is oligomerization domain. The tract at residues N552–F951 is carbamoyl phosphate synthetic domain. The ATP-grasp 2 domain maps to S678–V871. R714, K756, L758, E763, G788, I789, H790, S791, Q830, and E842 together coordinate ATP. The Mg(2+) site is built by Q830, E842, and N844. The Mn(2+) site is built by Q830, E842, and N844. One can recognise an MGS-like domain in the interval N952–K1085. The segment at N952–K1085 is allosteric domain.

The protein belongs to the CarB family. Composed of two chains; the small (or glutamine) chain promotes the hydrolysis of glutamine to ammonia, which is used by the large (or ammonia) chain to synthesize carbamoyl phosphate. Tetramer of heterodimers (alpha,beta)4. Mg(2+) is required as a cofactor. Mn(2+) serves as cofactor.

The enzyme catalyses hydrogencarbonate + L-glutamine + 2 ATP + H2O = carbamoyl phosphate + L-glutamate + 2 ADP + phosphate + 2 H(+). It catalyses the reaction hydrogencarbonate + NH4(+) + 2 ATP = carbamoyl phosphate + 2 ADP + phosphate + 2 H(+). It functions in the pathway amino-acid biosynthesis; L-arginine biosynthesis; carbamoyl phosphate from bicarbonate: step 1/1. It participates in pyrimidine metabolism; UMP biosynthesis via de novo pathway; (S)-dihydroorotate from bicarbonate: step 1/3. Its function is as follows. Large subunit of the glutamine-dependent carbamoyl phosphate synthetase (CPSase). CPSase catalyzes the formation of carbamoyl phosphate from the ammonia moiety of glutamine, carbonate, and phosphate donated by ATP, constituting the first step of 2 biosynthetic pathways, one leading to arginine and/or urea and the other to pyrimidine nucleotides. The large subunit (synthetase) binds the substrates ammonia (free or transferred from glutamine from the small subunit), hydrogencarbonate and ATP and carries out an ATP-coupled ligase reaction, activating hydrogencarbonate by forming carboxy phosphate which reacts with ammonia to form carbamoyl phosphate. This is Carbamoyl phosphate synthase large chain from Helicobacter pylori (strain J99 / ATCC 700824) (Campylobacter pylori J99).